The primary structure comprises 876 residues: Valine--tRNA ligase (876 aa).

The 'HIGH' region signature appears at 44–54 (PNVTGKLHLGH). Residues 520–524 (KMSKS) carry the 'KMSKS' region motif. Lys-523 contributes to the ATP binding site. Positions 806 to 876 (EGLIDMDKEI…VKLRINQLKA (71 aa)) form a coiled coil.

The protein belongs to the class-I aminoacyl-tRNA synthetase family. ValS type 1 subfamily. In terms of assembly, monomer.

Its subcellular location is the cytoplasm. The enzyme catalyses tRNA(Val) + L-valine + ATP = L-valyl-tRNA(Val) + AMP + diphosphate. Catalyzes the attachment of valine to tRNA(Val). As ValRS can inadvertently accommodate and process structurally similar amino acids such as threonine, to avoid such errors, it has a 'posttransfer' editing activity that hydrolyzes mischarged Thr-tRNA(Val) in a tRNA-dependent manner. The sequence is that of Valine--tRNA ligase from Staphylococcus saprophyticus subsp. saprophyticus (strain ATCC 15305 / DSM 20229 / NCIMB 8711 / NCTC 7292 / S-41).